Consider the following 376-residue polypeptide: Succinyl-diaminopimelate desuccinylase (376 aa).

A Zn(2+)-binding site is contributed by histidine 66. Aspartate 68 is an active-site residue. Residue aspartate 99 participates in Zn(2+) binding. Glutamate 133 acts as the Proton acceptor in catalysis. The Zn(2+) site is built by glutamate 134, glutamate 162, and histidine 348.

The protein belongs to the peptidase M20A family. DapE subfamily. Homodimer. Requires Zn(2+) as cofactor. The cofactor is Co(2+).

The catalysed reaction is N-succinyl-(2S,6S)-2,6-diaminopimelate + H2O = (2S,6S)-2,6-diaminopimelate + succinate. It functions in the pathway amino-acid biosynthesis; L-lysine biosynthesis via DAP pathway; LL-2,6-diaminopimelate from (S)-tetrahydrodipicolinate (succinylase route): step 3/3. In terms of biological role, catalyzes the hydrolysis of N-succinyl-L,L-diaminopimelic acid (SDAP), forming succinate and LL-2,6-diaminopimelate (DAP), an intermediate involved in the bacterial biosynthesis of lysine and meso-diaminopimelic acid, an essential component of bacterial cell walls. The chain is Succinyl-diaminopimelate desuccinylase from Nitrosococcus oceani (strain ATCC 19707 / BCRC 17464 / JCM 30415 / NCIMB 11848 / C-107).